Here is a 703-residue protein sequence, read N- to C-terminus: Polyribonucleotide nucleotidyltransferase (703 aa).

Asp-489 and Asp-495 together coordinate Mg(2+). In terms of domain architecture, KH spans Pro-556–Val-615. The S1 motif domain maps to Gly-625 to Lys-693.

Belongs to the polyribonucleotide nucleotidyltransferase family. In terms of assembly, component of the RNA degradosome, which is a multiprotein complex involved in RNA processing and mRNA degradation. It depends on Mg(2+) as a cofactor.

Its subcellular location is the cytoplasm. It catalyses the reaction RNA(n+1) + phosphate = RNA(n) + a ribonucleoside 5'-diphosphate. In terms of biological role, involved in mRNA degradation. Catalyzes the phosphorolysis of single-stranded polyribonucleotides processively in the 3'- to 5'-direction. In Pseudomonas fluorescens (strain ATCC BAA-477 / NRRL B-23932 / Pf-5), this protein is Polyribonucleotide nucleotidyltransferase.